The following is a 171-amino-acid chain: Sec-independent protein translocase protein TatB (171 aa).

A helical transmembrane segment spans residues 1–21 (MFDIGFSELLLVFIIGLVVLG). The disordered stretch occupies residues 117–171 (KDNETAHEGVTPAAAQTQASSPEQKPETTPEPVVKPAADAEPKTAAPSPSSSDKP). The segment covering 130–139 (AAQTQASSPE) has biased composition (polar residues).

Belongs to the TatB family. The Tat system comprises two distinct complexes: a TatABC complex, containing multiple copies of TatA, TatB and TatC subunits, and a separate TatA complex, containing only TatA subunits. Substrates initially bind to the TatABC complex, which probably triggers association of the separate TatA complex to form the active translocon.

It localises to the cell inner membrane. Part of the twin-arginine translocation (Tat) system that transports large folded proteins containing a characteristic twin-arginine motif in their signal peptide across membranes. Together with TatC, TatB is part of a receptor directly interacting with Tat signal peptides. TatB may form an oligomeric binding site that transiently accommodates folded Tat precursor proteins before their translocation. This Escherichia coli O6:K15:H31 (strain 536 / UPEC) protein is Sec-independent protein translocase protein TatB.